The chain runs to 191 residues: Protein Ves (191 aa).

Belongs to the Ves family.

This Escherichia coli (strain K12 / MC4100 / BW2952) protein is Protein Ves.